The following is a 280-amino-acid chain: Phosphatidylglycerol--prolipoprotein diacylglyceryl transferase (280 aa).

4 helical membrane-spanning segments follow: residues 12–32 (FGPFVLRWYGLLIAAAVLIGL), 52–72 (LLPLLVLFSVIGARIYYVAFE), 86–106 (IWEGGIAIHGALIAGTLTLIL), and 115–133 (FWDVLDVLVPSVALGQSIG). Arg-134 serves as a coordination point for a 1,2-diacyl-sn-glycero-3-phospho-(1'-sn-glycerol). The next 3 helical transmembrane spans lie at 173–193 (PTFLYESLWNLALFIILILLF), 203–223 (LPAGAMSCIYLMGYSLGRVWI), and 246–266 (IAQLMSGVMALAGSLGLWWLY).

This sequence belongs to the Lgt family.

It is found in the cell inner membrane. It carries out the reaction L-cysteinyl-[prolipoprotein] + a 1,2-diacyl-sn-glycero-3-phospho-(1'-sn-glycerol) = an S-1,2-diacyl-sn-glyceryl-L-cysteinyl-[prolipoprotein] + sn-glycerol 1-phosphate + H(+). It functions in the pathway protein modification; lipoprotein biosynthesis (diacylglyceryl transfer). Its function is as follows. Catalyzes the transfer of the diacylglyceryl group from phosphatidylglycerol to the sulfhydryl group of the N-terminal cysteine of a prolipoprotein, the first step in the formation of mature lipoproteins. In Synechococcus sp. (strain CC9902), this protein is Phosphatidylglycerol--prolipoprotein diacylglyceryl transferase.